The sequence spans 90 residues: Probable Fe(2+)-trafficking protein (90 aa).

The protein belongs to the Fe(2+)-trafficking protein family.

In terms of biological role, could be a mediator in iron transactions between iron acquisition and iron-requiring processes, such as synthesis and/or repair of Fe-S clusters in biosynthetic enzymes. The polypeptide is Probable Fe(2+)-trafficking protein (Acinetobacter baylyi (strain ATCC 33305 / BD413 / ADP1)).